A 146-amino-acid polypeptide reads, in one-letter code: Large ribosomal subunit protein uL15 (146 aa).

Positions Met1–Gln54 are disordered. Composition is skewed to gly residues over residues Arg21–Ala31 and Ser42–Gly52.

Belongs to the universal ribosomal protein uL15 family. In terms of assembly, part of the 50S ribosomal subunit.

In terms of biological role, binds to the 23S rRNA. The protein is Large ribosomal subunit protein uL15 of Clostridium acetobutylicum (strain ATCC 824 / DSM 792 / JCM 1419 / IAM 19013 / LMG 5710 / NBRC 13948 / NRRL B-527 / VKM B-1787 / 2291 / W).